The following is a 119-amino-acid chain: Photosystem II extrinsic protein V (119 aa).

Cysteine 36, cysteine 39, and histidine 40 together coordinate heme c.

It belongs to the cytochrome c family. PsbV subfamily. PSII is composed of 1 copy each of membrane proteins PsbA, PsbB, PsbC, PsbD, PsbE, PsbF, PsbH, PsbI, PsbJ, PsbK, PsbL, PsbM, PsbT, PsbX, PsbY, PsbZ, Psb30/Ycf12, peripheral proteins PsbO, CyanoQ (PsbQ), PsbU, PsbV and a large number of cofactors. It forms dimeric complexes. It depends on heme c as a cofactor.

It localises to the cellular thylakoid membrane. Its function is as follows. One of the extrinsic, lumenal subunits of photosystem II (PSII). PSII is a light-driven water plastoquinone oxidoreductase, using light energy to abstract electrons from H(2)O, generating a proton gradient subsequently used for ATP formation. The extrinsic proteins stabilize the structure of photosystem II oxygen-evolving complex (OEC), the ion environment of oxygen evolution and protect the OEC against heat-induced inactivation. Low-potential cytochrome c that plays a role in the OEC of PSII. This Aphanizomenon flos-aquae protein is Photosystem II extrinsic protein V (psbV).